A 123-amino-acid chain; its full sequence is Large ribosomal subunit protein uL29 (123 aa).

Lysine 19 bears the N6-acetyllysine mark. Residue lysine 25 forms a Glycyl lysine isopeptide (Lys-Gly) (interchain with G-Cter in SUMO2) linkage. A Phosphoserine modification is found at serine 29. Lysine 43 is subject to N6-acetyllysine. The interval 95–114 (LNKHEENLKTKKQQRKERLY) is disordered.

Belongs to the universal ribosomal protein uL29 family. As to quaternary structure, component of the large ribosomal subunit.

The protein localises to the cytoplasm. Functionally, component of the large ribosomal subunit. The ribosome is a large ribonucleoprotein complex responsible for the synthesis of proteins in the cell. In Bos taurus (Bovine), this protein is Large ribosomal subunit protein uL29 (RPL35).